A 144-amino-acid polypeptide reads, in one-letter code: Large ribosomal subunit protein uL13 (144 aa).

The protein belongs to the universal ribosomal protein uL13 family. In terms of assembly, part of the 50S ribosomal subunit.

Its function is as follows. This protein is one of the early assembly proteins of the 50S ribosomal subunit, although it is not seen to bind rRNA by itself. It is important during the early stages of 50S assembly. The chain is Large ribosomal subunit protein uL13 from Clostridium botulinum (strain ATCC 19397 / Type A).